An 88-amino-acid chain; its full sequence is Elongation factor 1-beta (88 aa).

The protein belongs to the EF-1-beta/EF-1-delta family.

In terms of biological role, promotes the exchange of GDP for GTP in EF-1-alpha/GDP, thus allowing the regeneration of EF-1-alpha/GTP that could then be used to form the ternary complex EF-1-alpha/GTP/AAtRNA. The chain is Elongation factor 1-beta from Halobacterium salinarum (strain ATCC 29341 / DSM 671 / R1).